A 498-amino-acid polypeptide reads, in one-letter code: MRINPTTSGPGVSALEEKNLGRIAQIIGPVLDVAFPPGKMPNIYNALVVKGRDTVGQQINVTCEVQQLLGNNRVRAVAMSATDGLTRGMEVIDTGAPLSVPVGGATLGRIFNVLGEPVDNLGPVDTRTTSPIHRSAPAFIQLDTKLSIFETGIKVVDLLAPYRRGGKIGLFGGAGVGKTVLIMELINNIAKAHGGVSVFGGVGERTREGNDLYMEMKESGVINEQNIAESKVALVYGQMNEPPGARMRVGLTALTMAEYFRDVNEQDVLLFIDNIFRFVQAGSEVSALLGRMPSAVGYQPTLSTEMGSLQERITSTKEGSITSIQAVYVPADDLTDPAPATTFAHLDATTVLSRGLAAKGIYPAVDPLDSTSTMLQPRIVGEEHYETAQRVKQTLQRYKELQDIIAILGLDELSEEDRLTVARARKIERFLSQPFFVAEVFTGSPGKYVGLAETIRGFQLILSGELDGLPEQAFYLVGNIDEATAKAMNLEVESKLKK.

Position 172–179 (172–179) interacts with ATP; it reads GGAGVGKT.

Belongs to the ATPase alpha/beta chains family. As to quaternary structure, F-type ATPases have 2 components, CF(1) - the catalytic core - and CF(0) - the membrane proton channel. CF(1) has five subunits: alpha(3), beta(3), gamma(1), delta(1), epsilon(1). CF(0) has four main subunits: a(1), b(1), b'(1) and c(9-12).

It localises to the plastid. The protein resides in the chloroplast thylakoid membrane. It carries out the reaction ATP + H2O + 4 H(+)(in) = ADP + phosphate + 5 H(+)(out). Produces ATP from ADP in the presence of a proton gradient across the membrane. The catalytic sites are hosted primarily by the beta subunits. The polypeptide is ATP synthase subunit beta, chloroplastic (Platanus occidentalis (Sycamore)).